The primary structure comprises 227 residues: ATP-dependent dethiobiotin synthetase BioD (227 aa).

13–18 (DIGKTY) lines the ATP pocket. Thr17 is a binding site for Mg(2+). Lys38 is an active-site residue. Ser42 is a substrate binding site. ATP contacts are provided by residues Asp55, 116-119 (EGSG), and 179-180 (NN). The Mg(2+) site is built by Asp55 and Glu116.

The protein belongs to the dethiobiotin synthetase family. As to quaternary structure, homodimer. Mg(2+) serves as cofactor.

It localises to the cytoplasm. The catalysed reaction is (7R,8S)-7,8-diammoniononanoate + CO2 + ATP = (4R,5S)-dethiobiotin + ADP + phosphate + 3 H(+). Its pathway is cofactor biosynthesis; biotin biosynthesis; biotin from 7,8-diaminononanoate: step 1/2. In terms of biological role, catalyzes a mechanistically unusual reaction, the ATP-dependent insertion of CO2 between the N7 and N8 nitrogen atoms of 7,8-diaminopelargonic acid (DAPA, also called 7,8-diammoniononanoate) to form a ureido ring. The sequence is that of ATP-dependent dethiobiotin synthetase BioD from Clostridium botulinum (strain ATCC 19397 / Type A).